The sequence spans 185 residues: Ovomucoid (185 aa).

3 consecutive Kazal-like domains span residues 1-63 (VEVD…ECRE), 64-128 (AVPM…ECRK), and 131-185 (AAVS…FGKC). Cystine bridges form between cysteine 5-cysteine 43, cysteine 22-cysteine 40, cysteine 30-cysteine 61, cysteine 69-cysteine 108, cysteine 86-cysteine 105, cysteine 94-cysteine 126, cysteine 137-cysteine 167, cysteine 145-cysteine 164, and cysteine 153-cysteine 185. Asparagine 174 carries N-linked (GlcNAc...) asparagine glycosylation.

It is found in the secreted. The chain is Ovomucoid from Meleagris gallopavo (Wild turkey).